The following is a 363-amino-acid chain: Pulmonary surfactant-associated protein B (363 aa).

The N-terminal stretch at leucine 1–alanine 16 is a signal peptide. Residues aspartate 17 to glutamine 180 constitute a propeptide that is removed on maturation. Positions tryptophan 18–alanine 58 constitute a Saposin A-type domain. 3 Saposin B-type domains span residues alanine 58–leucine 140, proline 184–aspartate 261, and glutamine 277–phenylalanine 352. 9 disulfide bridges follow: cysteine 62–cysteine 136, cysteine 65–cysteine 130, cysteine 93–cysteine 105, cysteine 188–cysteine 257, cysteine 191–cysteine 251, cysteine 215–cysteine 226, cysteine 281–cysteine 348, cysteine 284–cysteine 342, and cysteine 307–cysteine 317. A propeptide spanning residues glutamate 260–phenylalanine 363 is cleaved from the precursor. N-linked (GlcNAc...) asparagine glycosylation is present at asparagine 293.

Homodimer; disulfide-linked.

The protein localises to the secreted. Its subcellular location is the extracellular space. It localises to the surface film. Its function is as follows. Pulmonary surfactant-associated proteins promote alveolar stability by lowering the surface tension at the air-liquid interface in the peripheral air spaces. SP-B increases the collapse pressure of palmitic acid to nearly 70 millinewtons per meter. In Canis lupus familiaris (Dog), this protein is Pulmonary surfactant-associated protein B (SFTPB).